We begin with the raw amino-acid sequence, 754 residues long: Leucine-rich repeat-containing protein 36 (754 aa).

LRR repeat units lie at residues 51–72 and 73–94; these read NLRSLDLSRNLITSLKGIQYLC and SLQDLNLYYNNIPSLVEVSRLQ. The region spanning 107–146 is the LRRCT domain; the sequence is NPVVRKDTDYRLFAVYTLQTLEKLDDRTVREGERKAAKLH. The span at 241–255 shows a compositional bias: basic and acidic residues; that stretch reads REMPSDNHQEDEFRH. Positions 241–270 are disordered; it reads REMPSDNHQEDEFRHYSPRQSTVRSPEKMT. Residues 600-680 adopt a coiled-coil conformation; the sequence is NDMESLKQKL…EKTVAILHES (81 aa). A disordered region spans residues 702–734; that stretch reads YSGKALLPPEKGHHLGRSSPFGKSTLSSSSPVA. Residues 722-732 are compositionally biased toward polar residues; sequence FGKSTLSSSSP.

The sequence is that of Leucine-rich repeat-containing protein 36 (LRRC36) from Homo sapiens (Human).